The following is a 77-amino-acid chain: Acyl carrier protein (77 aa).

The Carrier domain occupies 2–77 (SEKLQKIQAL…DAVAYIEERS (76 aa)). Residue S37 is modified to O-(pantetheine 4'-phosphoryl)serine.

The protein belongs to the acyl carrier protein (ACP) family. In terms of processing, 4'-phosphopantetheine is transferred from CoA to a specific serine of apo-ACP by AcpS. This modification is essential for activity because fatty acids are bound in thioester linkage to the sulfhydryl of the prosthetic group.

The protein resides in the cytoplasm. It functions in the pathway lipid metabolism; fatty acid biosynthesis. Functionally, carrier of the growing fatty acid chain in fatty acid biosynthesis. The chain is Acyl carrier protein from Desulforudis audaxviator (strain MP104C).